The following is a 224-amino-acid chain: UPF0758 protein BLi02933/BL00636 (224 aa).

The MPN domain maps to 102–224 (VIRFPEDAAN…FVSLKEKGYL (123 aa)). The Zn(2+) site is built by His173, His175, and Asp186. Residues 173–186 (HNHPSGDPAPSRED) carry the JAMM motif motif.

It belongs to the UPF0758 family.

This Bacillus licheniformis (strain ATCC 14580 / DSM 13 / JCM 2505 / CCUG 7422 / NBRC 12200 / NCIMB 9375 / NCTC 10341 / NRRL NRS-1264 / Gibson 46) protein is UPF0758 protein BLi02933/BL00636.